A 129-amino-acid polypeptide reads, in one-letter code: Small ribosomal subunit protein uS11 (129 aa).

This sequence belongs to the universal ribosomal protein uS11 family. As to quaternary structure, part of the 30S ribosomal subunit. Interacts with proteins S7 and S18. Binds to IF-3.

Its function is as follows. Located on the platform of the 30S subunit, it bridges several disparate RNA helices of the 16S rRNA. Forms part of the Shine-Dalgarno cleft in the 70S ribosome. This chain is Small ribosomal subunit protein uS11, found in Cereibacter sphaeroides (strain ATCC 17025 / ATH 2.4.3) (Rhodobacter sphaeroides).